A 165-amino-acid polypeptide reads, in one-letter code: MKNIVLGGGCFWCVEAVFERLKGVIDTEVGYSGGNPNPSYESVCNGDGNIEVVKINYDEKQISLLEILTLFFKIHDPTSIDKQGGDIGIQYRSIIFYENEEDKILAQNFIEEQQKIFSKKIVTKISRLQTYYKAENYHQHYFINNPNQGYCQAVIAPKLQKIQSD.

Residue C10 is part of the active site.

The protein belongs to the MsrA Met sulfoxide reductase family.

The enzyme catalyses L-methionyl-[protein] + [thioredoxin]-disulfide + H2O = L-methionyl-(S)-S-oxide-[protein] + [thioredoxin]-dithiol. It carries out the reaction [thioredoxin]-disulfide + L-methionine + H2O = L-methionine (S)-S-oxide + [thioredoxin]-dithiol. Its function is as follows. Has an important function as a repair enzyme for proteins that have been inactivated by oxidation. Catalyzes the reversible oxidation-reduction of methionine sulfoxide in proteins to methionine. This is Peptide methionine sulfoxide reductase MsrA from Campylobacter jejuni subsp. jejuni serotype O:23/36 (strain 81-176).